Reading from the N-terminus, the 452-residue chain is Phenylalanine-4-hydroxylase (452 aa).

Residue S16 is modified to Phosphoserine; by PKA. Residues 36–114 (SLIFSLKEEV…TVHELSRDKK (79 aa)) enclose the ACT domain. Residues H285, H290, and E330 each coordinate Fe cation.

This sequence belongs to the biopterin-dependent aromatic amino acid hydroxylase family. In terms of assembly, homodimer and homotetramer. Fe(2+) serves as cofactor. Phosphorylation at Ser-16 increases basal activity and facilitates activation by the substrate phenylalanine.

The catalysed reaction is (6R)-L-erythro-5,6,7,8-tetrahydrobiopterin + L-phenylalanine + O2 = (4aS,6R)-4a-hydroxy-L-erythro-5,6,7,8-tetrahydrobiopterin + L-tyrosine. It participates in amino-acid degradation; L-phenylalanine degradation; acetoacetate and fumarate from L-phenylalanine: step 1/6. N-terminal region of PAH is thought to contain allosteric binding sites for phenylalanine and to constitute an 'inhibitory' domain that regulates the activity of a catalytic domain in the C-terminal portion of the molecule. Its function is as follows. Catalyzes the hydroxylation of L-phenylalanine to L-tyrosine. The polypeptide is Phenylalanine-4-hydroxylase (PAH) (Homo sapiens (Human)).